An 804-amino-acid polypeptide reads, in one-letter code: DNA mismatch repair protein MutS (804 aa).

Residue 614–621 (GPNMAGKS) coordinates ATP.

Belongs to the DNA mismatch repair MutS family.

Functionally, this protein is involved in the repair of mismatches in DNA. It is possible that it carries out the mismatch recognition step. This protein has a weak ATPase activity. The sequence is that of DNA mismatch repair protein MutS from Ehrlichia ruminantium (strain Gardel).